Here is a 93-residue protein sequence, read N- to C-terminus: Large ribosomal subunit protein uL23 (93 aa).

It belongs to the universal ribosomal protein uL23 family. In terms of assembly, part of the 50S ribosomal subunit. Contacts protein L29, and trigger factor when it is bound to the ribosome.

Its function is as follows. One of the early assembly proteins it binds 23S rRNA. One of the proteins that surrounds the polypeptide exit tunnel on the outside of the ribosome. Forms the main docking site for trigger factor binding to the ribosome. This is Large ribosomal subunit protein uL23 from Helicobacter pylori (strain P12).